A 222-amino-acid polypeptide reads, in one-letter code: CCA-adding enzyme (222 aa).

Ser50 and Lys53 together coordinate ATP. The CTP site is built by Ser50 and Lys53. Mg(2+) contacts are provided by Asp61, Asp63, and Asp112. ATP is bound by residues His135, Lys155, and Tyr164. CTP-binding residues include His135, Lys155, and Tyr164.

This sequence belongs to the tRNA nucleotidyltransferase/poly(A) polymerase family. Archaeal CCA-adding enzyme subfamily. As to quaternary structure, homodimer. Mg(2+) is required as a cofactor.

It catalyses the reaction a tRNA precursor + 2 CTP + ATP = a tRNA with a 3' CCA end + 3 diphosphate. The catalysed reaction is a tRNA with a 3' CCA end + 2 CTP + ATP = a tRNA with a 3' CCACCA end + 3 diphosphate. Functionally, catalyzes the addition and repair of the essential 3'-terminal CCA sequence in tRNAs without using a nucleic acid template. Adds these three nucleotides in the order of C, C, and A to the tRNA nucleotide-73, using CTP and ATP as substrates and producing inorganic pyrophosphate. tRNA 3'-terminal CCA addition is required both for tRNA processing and repair. Also involved in tRNA surveillance by mediating tandem CCA addition to generate a CCACCA at the 3' terminus of unstable tRNAs. While stable tRNAs receive only 3'-terminal CCA, unstable tRNAs are marked with CCACCA and rapidly degraded. This chain is CCA-adding enzyme, found in Thermoplasma acidophilum.